A 391-amino-acid chain; its full sequence is DNA-directed RNA polymerase subunit Rpo1C (391 aa).

It belongs to the RNA polymerase beta' chain family. As to quaternary structure, part of the RNA polymerase complex.

The protein resides in the cytoplasm. It catalyses the reaction RNA(n) + a ribonucleoside 5'-triphosphate = RNA(n+1) + diphosphate. Functionally, DNA-dependent RNA polymerase (RNAP) catalyzes the transcription of DNA into RNA using the four ribonucleoside triphosphates as substrates. Forms part of the jaw domain. This is DNA-directed RNA polymerase subunit Rpo1C from Thermococcus onnurineus (strain NA1).